The sequence spans 199 residues: Recombination protein RecR (199 aa).

The C4-type zinc-finger motif lies at 57 to 72 (CRSCRTFTEESHCPIC). Residues 81–176 (EQICVVETPA…SVSRIAHGVP (96 aa)) enclose the Toprim domain.

It belongs to the RecR family.

In terms of biological role, may play a role in DNA repair. It seems to be involved in an RecBC-independent recombinational process of DNA repair. It may act with RecF and RecO. The polypeptide is Recombination protein RecR (Shewanella sediminis (strain HAW-EB3)).